The following is a 3907-amino-acid chain: A-kinase anchor protein 9 (3907 aa).

The span at 1-14 shows a compositional bias: basic and acidic residues; that stretch reads MEDEERQKKLEAGK. Residues 1 to 57 are disordered; it reads MEDEERQKKLEAGKAKLAQFRQRKAQSDGQSPSKKQKKKRKTSSSKHDVSAHHDLNI. A compositionally biased stretch (basic residues) spans 34–44; it reads KKQKKKRKTSS. Basic and acidic residues predominate over residues 45–56; it reads SKHDVSAHHDLN. 7 coiled-coil regions span residues 152-902, 932-1010, 1088-1173, 1241-1268, 1324-1380, 1422-1447, and 1573-1647; these read DSPT…ELHL, EVVE…ENVQ, QPSE…QTMK, ELQD…EEYN, KLSS…ESTV, VKEE…VAKV, and SMDA…DNEN. Residue Ser-153 is modified to Phosphoserine. Position 1327 is a phosphoserine (Ser-1327). The segment covering 1682 to 1692 has biased composition (low complexity); sequence STQTQNGNENQ. A disordered region spans residues 1682-1713; sequence STQTQNGNENQGEVEEQTFKEKELDRKPEDVP. Residues 1698–1711 show a composition bias toward basic and acidic residues; it reads QTFKEKELDRKPED. At Ser-1765 the chain carries Phosphoserine. Coiled-coil stretches lie at residues 1845-2443, 2532-2549, 2591-2764, 3061-3088, 3120-3466, and 3583-3685; these read NISS…VEKI, ETEM…IVEE, QLRE…SKKA, LNCL…ADRR, ELLE…NLNE, and SLTE…NDSL. Residues 2542–2555 form a PKA-RII subunit binding domain region; sequence NLQKIVEEKVAAAL. A disordered region spans residues 3377–3405; sequence RQQMEKDRQVHRKTLQTEQEANTEGQKKM. Ser-3690, Ser-3842, Ser-3865, and Ser-3897 each carry phosphoserine.

As to quaternary structure, interacts with the regulatory region of protein kinase N (PKN), protein phosphatase 2A (PP2A), protein phosphatase 1 (PP1) and the immature non-phosphorylated form of PKC epsilon. Interacts with CIP4 and FNBP1. Interacts with chloride intracellular channel proteins CLIC1, CLIC4 and CLIC5. CSNK1D binding promotes its centrosomal subcellular location. Interacts with GM130/GOLGA2; leading to recruitment to the Golgi apparatus. Interacts with KCNQ1; targets protein kinase A (PKA) catalytic and regulatory subunits and protein phosphatase 1 (PP1), to the heterodimer KCNQ1-KCNE1. Interacts with PDE4DIP isoform 13/MMG8/SMYLE; this interaction stabilizes both proteins. In complex with PDE4DIP isoform 13, recruits CAMSAP2 to the Golgi apparatus. Forms a pericentrosomal complex with CDK5RAP2, EB1/MAPRE1 and PDE4DIP isoform 13; within this complex, MAPRE1 binding to CDK5RAP2 may be mediated by PDE4DIP. Interacts with MAPRE1 and MAPRE3. Interacts (via C-terminus) with CAMSAP2; this interaction is much stronger in the presence of PDE4DIP isoform 13/MMG8/SMYLE. Interacts with CAMSAP3. Interacts (via C-terminus) with the gamma-tubulin ring complex (gamma-TuRC), composed of gamma-tubulin, TUBGCP2, TUBGCP3, TUBGCP4, TUBGCP5 and TUBGCP6. Widely expressed. Isoform 4: Highly expressed in skeletal muscle and in pancreas.

It localises to the golgi apparatus. Its subcellular location is the cytoplasm. The protein localises to the cytoskeleton. It is found in the microtubule organizing center. The protein resides in the centrosome. In terms of biological role, scaffolding protein that assembles several protein kinases and phosphatases on the centrosome and Golgi apparatus. Required to maintain the integrity of the Golgi apparatus. Required for microtubule nucleation at the cis-side of the Golgi apparatus. Required for association of the centrosomes with the poles of the bipolar mitotic spindle during metaphase. In complex with PDE4DIP isoform 13/MMG8/SMYLE, recruits CAMSAP2 to the Golgi apparatus and tethers non-centrosomal minus-end microtubules to the Golgi, an important step for polarized cell movement. In complex with PDE4DIP isoform 13/MMG8/SMYLE, EB1/MAPRE1 and CDK5RAP2, contributes to microtubules nucleation and extension also from the centrosome to the cell periphery. Its function is as follows. Associated with the N-methyl-D-aspartate receptor and is specifically found in the neuromuscular junction (NMJ) as well as in neuronal synapses, suggesting a role in the organization of postsynaptic specializations. The polypeptide is A-kinase anchor protein 9 (AKAP9) (Homo sapiens (Human)).